The sequence spans 403 residues: S-adenosylmethionine synthase (403 aa).

Residue His15 participates in ATP binding. A Mg(2+)-binding site is contributed by Asp17. Residue Glu43 participates in K(+) binding. Glu56 and Gln99 together coordinate L-methionine. Positions 99-109 (QSPDINQGVDR) are flexible loop. Residues 166 to 168 (DAK), 232 to 233 (KF), Asp241, 247 to 248 (RK), Ala264, and Lys268 contribute to the ATP site. An L-methionine-binding site is contributed by Asp241. Residue Lys272 participates in L-methionine binding.

Belongs to the AdoMet synthase family. Homotetramer; dimer of dimers. Mg(2+) serves as cofactor. K(+) is required as a cofactor.

It localises to the cytoplasm. It catalyses the reaction L-methionine + ATP + H2O = S-adenosyl-L-methionine + phosphate + diphosphate. Its pathway is amino-acid biosynthesis; S-adenosyl-L-methionine biosynthesis; S-adenosyl-L-methionine from L-methionine: step 1/1. In terms of biological role, catalyzes the formation of S-adenosylmethionine (AdoMet) from methionine and ATP. The overall synthetic reaction is composed of two sequential steps, AdoMet formation and the subsequent tripolyphosphate hydrolysis which occurs prior to release of AdoMet from the enzyme. The protein is S-adenosylmethionine synthase of Xanthomonas campestris pv. campestris (strain 8004).